The primary structure comprises 756 residues: 5-methyltetrahydropteroyltriglutamate--homocysteine methyltransferase (756 aa).

5-methyltetrahydropteroyltri-L-glutamate is bound by residues 20-23 and Lys-114; that span reads RELK. L-homocysteine is bound by residues 433 to 435 and Glu-486; that span reads IGS. Residues 433–435 and Glu-486 contribute to the L-methionine site; that span reads IGS. 5-methyltetrahydropteroyltri-L-glutamate contacts are provided by residues 517–518 and Trp-563; that span reads RC. An L-homocysteine-binding site is contributed by Asp-601. Position 601 (Asp-601) interacts with L-methionine. Position 607 (Glu-607) interacts with 5-methyltetrahydropteroyltri-L-glutamate. Positions 643, 645, and 667 each coordinate Zn(2+). Catalysis depends on His-696, which acts as the Proton donor. Residue Cys-728 participates in Zn(2+) binding.

It belongs to the vitamin-B12 independent methionine synthase family. Requires Zn(2+) as cofactor.

It carries out the reaction 5-methyltetrahydropteroyltri-L-glutamate + L-homocysteine = tetrahydropteroyltri-L-glutamate + L-methionine. It functions in the pathway amino-acid biosynthesis; L-methionine biosynthesis via de novo pathway; L-methionine from L-homocysteine (MetE route): step 1/1. Its function is as follows. Catalyzes the transfer of a methyl group from 5-methyltetrahydrofolate to homocysteine resulting in methionine formation. The protein is 5-methyltetrahydropteroyltriglutamate--homocysteine methyltransferase of Mycolicibacterium paratuberculosis (strain ATCC BAA-968 / K-10) (Mycobacterium paratuberculosis).